The following is a 249-amino-acid chain: Electron transfer flavoprotein subunit beta (249 aa).

It belongs to the ETF beta-subunit/FixA family. Heterodimer of an alpha and a beta subunit. It depends on FAD as a cofactor. The cofactor is AMP.

Its function is as follows. The electron transfer flavoprotein serves as a specific electron acceptor for other dehydrogenases. It transfers the electrons to the main respiratory chain via ETF-ubiquinone oxidoreductase (ETF dehydrogenase). The sequence is that of Electron transfer flavoprotein subunit beta (etfB) from Pseudomonas aeruginosa (strain ATCC 15692 / DSM 22644 / CIP 104116 / JCM 14847 / LMG 12228 / 1C / PRS 101 / PAO1).